A 272-amino-acid polypeptide reads, in one-letter code: Tryptophan synthase alpha chain (272 aa).

Residues glutamate 49 and glutamate 60 each act as proton acceptor in the active site.

This sequence belongs to the TrpA family. As to quaternary structure, tetramer of two alpha and two beta chains.

It carries out the reaction (1S,2R)-1-C-(indol-3-yl)glycerol 3-phosphate + L-serine = D-glyceraldehyde 3-phosphate + L-tryptophan + H2O. It functions in the pathway amino-acid biosynthesis; L-tryptophan biosynthesis; L-tryptophan from chorismate: step 5/5. The alpha subunit is responsible for the aldol cleavage of indoleglycerol phosphate to indole and glyceraldehyde 3-phosphate. The chain is Tryptophan synthase alpha chain from Legionella pneumophila subsp. pneumophila (strain Philadelphia 1 / ATCC 33152 / DSM 7513).